The primary structure comprises 340 residues: GTP 3',8-cyclase (340 aa).

One can recognise a Radical SAM core domain in the interval 8–227 (KLGRPIRDLR…TMIEQHFEID (220 aa)). Arg-17 contacts GTP. [4Fe-4S] cluster-binding residues include Cys-24 and Cys-28. Tyr-30 contributes to the S-adenosyl-L-methionine binding site. Cys-31 contributes to the [4Fe-4S] cluster binding site. Position 71 (Arg-71) interacts with GTP. Gly-75 provides a ligand contact to S-adenosyl-L-methionine. Position 102 (Thr-102) interacts with GTP. Position 126 (Ser-126) interacts with S-adenosyl-L-methionine. A GTP-binding site is contributed by Lys-163. Residue Met-197 coordinates S-adenosyl-L-methionine. Residues Cys-261 and Cys-264 each contribute to the [4Fe-4S] cluster site. 266 to 268 (RAR) contributes to the GTP binding site. [4Fe-4S] cluster is bound at residue Cys-278.

The protein belongs to the radical SAM superfamily. MoaA family. As to quaternary structure, monomer and homodimer. The cofactor is [4Fe-4S] cluster.

It carries out the reaction GTP + AH2 + S-adenosyl-L-methionine = (8S)-3',8-cyclo-7,8-dihydroguanosine 5'-triphosphate + 5'-deoxyadenosine + L-methionine + A + H(+). The protein operates within cofactor biosynthesis; molybdopterin biosynthesis. Its function is as follows. Catalyzes the cyclization of GTP to (8S)-3',8-cyclo-7,8-dihydroguanosine 5'-triphosphate. The polypeptide is GTP 3',8-cyclase (Staphylococcus aureus (strain USA300)).